A 301-amino-acid polypeptide reads, in one-letter code: Beta carbonic anhydrase 5, chloroplastic (301 aa).

The N-terminal 56 residues, 1–56 (MAATPTHFSVSHDPFSSTSLLNLQTQAIFGPNHSLKTTQLRIPASFRRKATNLQVM), are a transit peptide targeting the chloroplast. Phosphothreonine is present on Thr-65. Residue Ser-128 is modified to Phosphoserine. Residue Cys-231 is modified to S-nitrosocysteine.

Belongs to the beta-class carbonic anhydrase family. Strongly expressed in aerial tissues including leaves, stems, flowers and siliques.

Its subcellular location is the plastid. It is found in the chloroplast. It catalyses the reaction hydrogencarbonate + H(+) = CO2 + H2O. In terms of biological role, reversible hydration of carbon dioxide. This chain is Beta carbonic anhydrase 5, chloroplastic (BCA5), found in Arabidopsis thaliana (Mouse-ear cress).